A 132-amino-acid chain; its full sequence is MSLQLRSSARIPSGSISPFMRMAPLAFLLLFTLPQHLAEAAPSSVIAATELRCVCLTVTPKINPKLIANLEVIPAGPQCPTVEVIAKLKNQKEVCLDPEAPVIKKIIQKILGSDKKKAKRNALAVERTASVQ.

An N-terminal signal peptide occupies residues 1–40; the sequence is MSLQLRSSARIPSGSISPFMRMAPLAFLLLFTLPQHLAEA. Cystine bridges form between Cys53–Cys79 and Cys55–Cys95.

Belongs to the intercrine alpha (chemokine CxC) family. As to quaternary structure, monomer. Homodimer. GCP-2(1-78) and GCP-2(9-78) are produced by proteolytic cleavage after secretion from fibroblasts and epithelial cells. GCP-2(9-78) is the most prominent form. A number of additional N-terminal (processed between pos. 41 and 48) and C-terminal (processed between pos. 118 and 132) processed forms have been identified, probably also representing intermediate states.

The protein localises to the secreted. In terms of biological role, may participate in the recruitment of inflammatory cells by injured or infected tissue. GCP-2(1-78) and, more potent, GCP-2(9-78) attract neutrophils and are involved in neutrophil activation. This Mus musculus (Mouse) protein is C-X-C motif chemokine 5 (Cxcl5).